The primary structure comprises 201 residues: Probable GTP-binding protein EngB (201 aa).

An EngB-type G domain is found at 22-195; sequence TQPEFAFAGK…WRCIEQFLEV (174 aa). Residues 30-37, 57-61, 75-78, 142-145, and 174-176 contribute to the GTP site; these read GKSNVGKS, GKTQT, DLPG, TKLD, and FSS. Positions 37 and 59 each coordinate Mg(2+).

Belongs to the TRAFAC class TrmE-Era-EngA-EngB-Septin-like GTPase superfamily. EngB GTPase family. Requires Mg(2+) as cofactor.

Necessary for normal cell division and for the maintenance of normal septation. In Lachnoclostridium phytofermentans (strain ATCC 700394 / DSM 18823 / ISDg) (Clostridium phytofermentans), this protein is Probable GTP-binding protein EngB.